The chain runs to 236 residues: MTKRYWNIILEEMMEAGVHFGHGTRKWNPKMSPYISANRKGIHITNLIRTARFLSESCDLVFHAASGGKQFLIVGTKKKAADSVARAAIRARCHYVNKKWLGGMLTNWYTTKTRLQKFRDLRMQQKTGRFDCFPKKDAAILKRHLAQLETYLGGIKYMKGLPDIVIIIDQQEEYTALRECITLEIPTICLIDTNSDPDLADISIPANDDAIASIRFILNKLVFAICEGRSRSIRNS.

This sequence belongs to the universal ribosomal protein uS2 family.

It localises to the plastid. The protein localises to the chloroplast. This chain is Small ribosomal subunit protein uS2c (rps2), found in Phaseolus vulgaris (Kidney bean).